A 207-amino-acid chain; its full sequence is Serotonin N-acetyltransferase (207 aa).

Residues 1 to 28 (MSMQSTHPPKPEAPRLPPGIPESPSCQR) form a disordered region. Thr-31 carries the phosphothreonine; by PKA modification. One can recognise an N-acetyltransferase domain in the interval 35-202 (SEFRCLTPED…CSLRDHPFLR (168 aa)). Position 124 (Leu-124) interacts with substrate. Acetyl-CoA contacts are provided by residues 124–126 (LAV) and 132–137 (QQGRGP). Met-159 contacts substrate. 168–170 (YER) lines the acetyl-CoA pocket. At Ser-205 the chain carries Phosphoserine.

This sequence belongs to the acetyltransferase family. AANAT subfamily. As to quaternary structure, monomer. Interacts with several 14-3-3 proteins, including YWHAB, YWHAE, YWHAG and YWHAZ, preferentially when phosphorylated at Thr-31. Phosphorylation on Ser-205 also allows binding to YWHAZ, but with lower affinity. The interaction with YWHAZ considerably increases affinity for arylalkylamines and acetyl-CoA and protects the enzyme from dephosphorylation and proteasomal degradation. It may also prevent thiol-dependent inactivation. CAMP-dependent phosphorylation on both N-terminal Thr-31 and C-terminal Ser-205 regulates AANAT activity by promoting interaction with 14-3-3 proteins.

The protein localises to the cytoplasm. It carries out the reaction a 2-arylethylamine + acetyl-CoA = an N-acetyl-2-arylethylamine + CoA + H(+). The protein operates within aromatic compound metabolism; melatonin biosynthesis; melatonin from serotonin: step 1/2. Its function is as follows. Controls the night/day rhythm of melatonin production in the pineal gland. Catalyzes the N-acetylation of serotonin into N-acetylserotonin, the penultimate step in the synthesis of melatonin. In Pan troglodytes (Chimpanzee), this protein is Serotonin N-acetyltransferase (AANAT).